Reading from the N-terminus, the 278-residue chain is Serine protease 57 (278 aa).

The first 31 residues, 1 to 31 (MVPGTGGGRDCLTLVVATALTQLLWLPGCCG), serve as a signal peptide directing secretion. The Peptidase S1 domain maps to 34 to 263 (IVGGHEVKPH…FVSWIWDVVR (230 aa)). Cys59 and Cys75 are joined by a disulfide. Residues His74 and Asp122 each act as charge relay system in the active site. A glycan (N-linked (GlcNAc...) asparagine) is linked at Asn129. Intrachain disulfides connect Cys157–Cys224, Cys188–Cys202, and Cys214–Cys239. The active-site Charge relay system is the Ser218.

This sequence belongs to the peptidase S1 family. Post-translationally, after cleavage of the signal peptide, the N-terminus is probably further processed by CTSC. Processing by CTSC is probably required for accumulation in cytoplasmic granules; in the absence of CTSC the protein does not accumulate. In terms of processing, N-glycosylated.

Its subcellular location is the cytoplasmic granule lumen. The protein resides in the secreted. Its function is as follows. Serine protease that cleaves preferentially after Arg residues. Can also cleave after citrulline (deimidated arginine) and methylarginine residues. This chain is Serine protease 57 (Prss57), found in Rattus norvegicus (Rat).